A 405-amino-acid chain; its full sequence is Arginine biosynthesis bifunctional protein ArgJ (405 aa).

Thr152, Lys178, Thr189, Glu276, Asn400, and Thr405 together coordinate substrate. The active-site Nucleophile is Thr189.

It belongs to the ArgJ family. In terms of assembly, heterotetramer of two alpha and two beta chains.

Its subcellular location is the cytoplasm. The enzyme catalyses N(2)-acetyl-L-ornithine + L-glutamate = N-acetyl-L-glutamate + L-ornithine. The catalysed reaction is L-glutamate + acetyl-CoA = N-acetyl-L-glutamate + CoA + H(+). The protein operates within amino-acid biosynthesis; L-arginine biosynthesis; L-ornithine and N-acetyl-L-glutamate from L-glutamate and N(2)-acetyl-L-ornithine (cyclic): step 1/1. Its pathway is amino-acid biosynthesis; L-arginine biosynthesis; N(2)-acetyl-L-ornithine from L-glutamate: step 1/4. Catalyzes two activities which are involved in the cyclic version of arginine biosynthesis: the synthesis of N-acetylglutamate from glutamate and acetyl-CoA as the acetyl donor, and of ornithine by transacetylation between N(2)-acetylornithine and glutamate. This Pseudomonas putida (strain ATCC 47054 / DSM 6125 / CFBP 8728 / NCIMB 11950 / KT2440) protein is Arginine biosynthesis bifunctional protein ArgJ.